The sequence spans 193 residues: Interleukin-18 (193 aa).

Positions 1–36 (MAANLIEDNCINLVKMKFVNNTLYFKAESDEGLESD) are excised as a propeptide.

This sequence belongs to the IL-1 family. As to quaternary structure, forms a ternary complex with ligand-binding receptor subunit IL18R1 and signaling receptor subunit IL18RAP at the plasma membrane. Mature IL18 first binds to IL18R1 forming a low affinity binary complex, which then interacts with IL18RAP to form a high affinity ternary complex that signals inside the cell. Interacts with cargo receptor TMED10; the interaction mediates the translocation from the cytoplasm into the ERGIC (endoplasmic reticulum-Golgi intermediate compartment) and thereby secretion. The pro-IL-18 precursor is processed by CASP1, CASP4 or CASP5 to yield its mature, active form. The pro-IL-18 precursor features autoinhibitory interactions between the propeptide and the post-cleavage-site region, preventing recognition by the IL18R1 receptor. Processing by CASP1, CASP4 or CASP5 induces conformational changes to generate critical receptor-binding sites. The mature form is then secreted and released in the extracellular milieu by passing through the gasdermin-D (GSDMD) pore. In contrast, cleavage by CASP3 inactivates IL18.

Its subcellular location is the cytoplasm. The protein localises to the cytosol. It is found in the secreted. Its function is as follows. Pro-inflammatory cytokine primarily involved in epithelial barrier repair, polarized T-helper 1 (Th1) cell and natural killer (NK) cell immune responses. Upon binding to IL18R1 and IL18RAP, forms a signaling ternary complex which activates NF-kappa-B, triggering synthesis of inflammatory mediators. Synergizes with IL12/interleukin-12 to induce IFNG synthesis from T-helper 1 (Th1) cells and natural killer (NK) cells. Involved in transduction of inflammation downstream of pyroptosis: its mature form is specifically released in the extracellular milieu by passing through the gasdermin-D (GSDMD) pore. In Canis lupus familiaris (Dog), this protein is Interleukin-18 (IL18).